The sequence spans 273 residues: Undecaprenyl-diphosphatase (273 aa).

The next 8 membrane-spanning stretches (helical) occupy residues 4–24, 45–65, 84–104, 112–132, 149–169, 187–207, 219–239, and 251–271; these read IELL…WLPI, FMSM…VVLF, TFTL…MIPF, FFNP…FIII, ITYQ…IPGT, YVAA…ASLL, AEIV…IIVI, and FKVF…YFLL.

The protein belongs to the UppP family.

Its subcellular location is the cell membrane. It carries out the reaction di-trans,octa-cis-undecaprenyl diphosphate + H2O = di-trans,octa-cis-undecaprenyl phosphate + phosphate + H(+). Catalyzes the dephosphorylation of undecaprenyl diphosphate (UPP). Confers resistance to bacitracin. The protein is Undecaprenyl-diphosphatase of Lachnoclostridium phytofermentans (strain ATCC 700394 / DSM 18823 / ISDg) (Clostridium phytofermentans).